The primary structure comprises 391 residues: Zinc finger protein 414 (391 aa).

The interval 1–110 (MDEEPSGPSL…RRPPPGKQIP (110 aa)) is disordered. Residues 84-93 (GPTSTVSGTS) show a composition bias toward polar residues. C2H2-type zinc fingers lie at residues 109 to 133 (IPCS…LRTH), 145 to 169 (FRCS…GKLH), and 176 to 201 (FKCE…CAEH). 3 disordered regions span residues 201-243 (HAQS…LEPF), 274-312 (LAAA…SGHA), and 344-391 (HLED…FSPL). The span at 214–226 (LDRESPASERPPE) shows a compositional bias: basic and acidic residues. The span at 227–236 (SDPAPAPGLP) shows a compositional bias: pro residues. The span at 274–286 (LAAAPGPPASSAA) shows a compositional bias: low complexity. The C2H2-type 4 zinc-finger motif lies at 326–348 (YSCMQCAFSTASRPAMTLHLEDH). Positions 353 to 372 (PAAPAPGQPRPDAPADPAPL) are enriched in pro residues.

The protein belongs to the krueppel C2H2-type zinc-finger protein family.

It localises to the nucleus. In terms of biological role, may be involved in transcriptional regulation. The chain is Zinc finger protein 414 (ZNF414) from Bos taurus (Bovine).